A 268-amino-acid chain; its full sequence is Phosphatidylcholine synthase (268 aa).

The Cytoplasmic portion of the chain corresponds to 1–27 (MAARKAAKKLTDRIPRPKKKVTWPQAR). A helical transmembrane segment spans residues 28-48 (AFSVHLLTASGSFLAFLSLVA). Over 49–53 (ASEER) the chain is Periplasmic. The chain crosses the membrane as a helical span at residues 54 to 74 (WTAMFWWLGLALFVDGIDGPI). Over 75–88 (ARKLEVKEILPTWS) the chain is Cytoplasmic. A helical membrane pass occupies residues 89–109 (GELLDNIIDYVTYVLIPAFAL). Residues 110–112 (YQR) are Periplasmic-facing. Residues 113-133 (GFMGEGLSFLSAAIIVVSSAI) form a helical membrane-spanning segment. At 134-145 (YYADTGMKTKEN) the chain is on the cytoplasmic side. Residues 146-166 (FFKGFPVVWNMVVFTLFVIEP) form a helical membrane-spanning segment. The Periplasmic portion of the chain corresponds to 167 to 168 (GQ). Residues 169-189 (WVSFAVVVVAGILTFVPINFI) traverse the membrane as a helical segment. The Cytoplasmic portion of the chain corresponds to 190–203 (HPVRVVRLRPFNLT). The helical transmembrane segment at 204 to 224 (MTLLWCAFGALALAQAALAAF) threads the bilayer. Residues 225-240 (YDQIGVLGAQVSTFIK) lie on the Periplasmic side of the membrane. The chain crosses the membrane as a helical span at residues 241–261 (IGITITGLYLACIGGIMQFFP). Topologically, residues 262 to 268 (NLGAKKA) are cytoplasmic.

Belongs to the CDP-alcohol phosphatidyltransferase class-I family. Mn(2+) serves as cofactor.

The protein localises to the cell inner membrane. The enzyme catalyses a CDP-1,2-diacyl-sn-glycerol + choline = a 1,2-diacyl-sn-glycero-3-phosphocholine + CMP + H(+). Functionally, condenses choline with CDP-diglyceride to produce phosphatidylcholine and CMP. The sequence is that of Phosphatidylcholine synthase (pcs) from Mesorhizobium japonicum (strain LMG 29417 / CECT 9101 / MAFF 303099) (Mesorhizobium loti (strain MAFF 303099)).